We begin with the raw amino-acid sequence, 340 residues long: Outer membrane protein B (340 aa).

Residues 1–26 form the signal peptide; sequence MSSKLVNSLRLTFLSFLGIVSTSLDA.

This sequence belongs to the chlamydial OMP family.

It is found in the cell outer membrane. This chain is Outer membrane protein B (ompB), found in Chlamydia muridarum (strain MoPn / Nigg).